The primary structure comprises 123 residues: NADH-quinone oxidoreductase subunit A (123 aa).

Transmembrane regions (helical) follow at residues 11–31, 68–88, and 93–113; these read YLPI…IMIL, LVAI…PWAI, and IGKI…IGFI.

It belongs to the complex I subunit 3 family. In terms of assembly, NDH-1 is composed of 14 different subunits. Subunits NuoA, H, J, K, L, M, N constitute the membrane sector of the complex.

The protein resides in the cell inner membrane. It carries out the reaction a quinone + NADH + 5 H(+)(in) = a quinol + NAD(+) + 4 H(+)(out). NDH-1 shuttles electrons from NADH, via FMN and iron-sulfur (Fe-S) centers, to quinones in the respiratory chain. The immediate electron acceptor for the enzyme in this species is believed to be ubiquinone. Couples the redox reaction to proton translocation (for every two electrons transferred, four hydrogen ions are translocated across the cytoplasmic membrane), and thus conserves the redox energy in a proton gradient. This Rickettsia felis (strain ATCC VR-1525 / URRWXCal2) (Rickettsia azadi) protein is NADH-quinone oxidoreductase subunit A.